Consider the following 252-residue polypeptide: Hydrolase phiM (252 aa).

The active-site Charge relay system is the Ser126.

The protein belongs to the LovG family.

Its pathway is secondary metabolite biosynthesis. Its function is as follows. Hydrolase; part of the gene cluster that mediates the biosynthesis of the antihypercholesterolemic agents phomoidrides which are dimeric anhydrides. Within the pathway, phiM releases the C12-fatty acyl chain from phiA. The pathway begins with the highly reducing polyketide synthase tstA that catalyzes the formation of a C12-fatty acyl-ACP, starting from one acetate and 5 malonate units. The hydrolase tstM is involved in the release of the C12-fatty acyl chain from phiA. The alkylcitrate synthase (ACS) tstJ and the alkylcitrate dehydratase (ACDH) tstI then give rise to decarboxylated monomeric anhydrides by coupling the C12-fatty acyl chain with oxalacetic acid. The cyclase tstC is responsible for the dimerization of the monomeric anhydrides which leads to the production of prephomoidride that contains the characteristic bicyclo[4.3.1]deca-1,6-diene system of phomoidrides. Iterative oxidation catalyzed by the alpha-ketoglutarate-dependent dioxygenase tstK produced then phomoidride A. Finally, the methyltransferase tstE converts phomoidride A to phomoidride B via an acetalization reaction. The phosphatidylethanolamine-binding protein tstB and tstN are not essential for dimerization and their functions have still to be determined. The protein is Hydrolase phiM of Talaromyces stipitatus (strain ATCC 10500 / CBS 375.48 / QM 6759 / NRRL 1006) (Penicillium stipitatum).